The following is a 422-amino-acid chain: Ubiquitin-conjugating enzyme E2 Q1 (422 aa).

The residue at position 1 (M1) is an N-acetylmethionine. Residues M1–A24 are compositionally biased toward low complexity. Disordered regions lie at residues M1 to C40 and Q173 to G221. The segment covering P25–P35 has biased composition (gly residues). Positions V185–D200 are enriched in acidic residues. The span at A212–G221 shows a compositional bias: basic and acidic residues. Residues Q251–Y415 enclose the UBC core domain. C351 acts as the Glycyl thioester intermediate in catalysis.

The protein belongs to the ubiquitin-conjugating enzyme family. In terms of assembly, monomer and homodimer. Only the homodimer is linked to ubiquitin through thiolester activation. Interacts (via N-terminus) with B4GALT1 (via N-terminal cytoplasmic domain); the interaction is direct. Autoubiquitinated in vitro in the presence of NEDD4L. Expressed in liver, brain, heart, spleen, lung, kidney, muscle, ovary, epididymis, testis and placenta. Also expressed in thymus and ES cells. Only expressed in the uterus during pregnancy. Expressed in oocytes and during subsequent embryonic development stages (4-cell stage, blastocyst, 8.5 dpc, 13.5 dpc, 16.5 dpc and 18.5 dpc).

The protein resides in the nucleus. It localises to the cell projection. Its subcellular location is the filopodium. It is found in the cytoplasm. The protein localises to the cytosol. The enzyme catalyses S-ubiquitinyl-[E1 ubiquitin-activating enzyme]-L-cysteine + [E2 ubiquitin-conjugating enzyme]-L-cysteine = [E1 ubiquitin-activating enzyme]-L-cysteine + S-ubiquitinyl-[E2 ubiquitin-conjugating enzyme]-L-cysteine.. Its pathway is protein modification; protein ubiquitination. In terms of biological role, catalyzes the covalent attachment of ubiquitin to other proteins. Involved in female fertility and embryo implantation. May be involved in hormonal homeostasis in females. Involved in regulation of B4GALT1 cell surface expression, B4GALT1-mediated cell adhesion to laminin and embryoid body formation. This chain is Ubiquitin-conjugating enzyme E2 Q1 (Ube2q1), found in Mus musculus (Mouse).